Here is a 329-residue protein sequence, read N- to C-terminus: Vitamin B12 import system permease protein BtuC (329 aa).

Helical transmembrane passes span 22-42, 64-84, 91-111, 115-135, 149-169, 187-207, 243-263, 277-297, and 305-325; these read LSVL…QWIA, LAVL…QALF, PGLL…VLLG, LPGW…TLIL, LLAG…AIYF, GGVD…SLWI, GWMV…GLVI, ALLP…DVIA, and ELPI…WLLL.

Belongs to the binding-protein-dependent transport system permease family. FecCD subfamily. In terms of assembly, the complex is composed of two ATP-binding proteins (BtuD), two transmembrane proteins (BtuC) and a solute-binding protein (BtuF).

The protein resides in the cell inner membrane. Its function is as follows. Part of the ABC transporter complex BtuCDF involved in vitamin B12 import. Involved in the translocation of the substrate across the membrane. This is Vitamin B12 import system permease protein BtuC from Citrobacter koseri (strain ATCC BAA-895 / CDC 4225-83 / SGSC4696).